The chain runs to 597 residues: Kelch-like protein 21 (597 aa).

Residues 35 to 103 (LDVTLEAAGG…SYTGRVAVSG (69 aa)) enclose the BTB domain. The BACK domain maps to 138–239 (CLDMQDFAEA…RRFYLLAHVE (102 aa)). 6 Kelch repeats span residues 287–335 (ILVL…ALGN), 336–382 (DIYV…VLNG), 384–422 (LYVV…ACRG), 423–470 (RLYA…TLNG), 472–512 (MYFV…ALGG), and 513–560 (KLYV…SIFR). The disordered stretch occupies residues 570–597 (GRGFELNSGSSDVDAGHHRLPQNPEELQ).

Component of the BCR(KLHL21) E3 ubiquitin ligase complex, at least composed of CUL3, KLHL21 and RBX1.

It localises to the cytoplasm. The protein localises to the cytoskeleton. The protein resides in the spindle. It participates in protein modification; protein ubiquitination. Functionally, substrate-specific adapter of BCR (BTB-CUL3-RBX1) E3 ubiquitin-protein ligase complex required for efficient chromosome alignment and cytokinesis. The BCR(KLHL21) E3 ubiquitin ligase complex regulates localization of the chromosomal passenger complex (CPC) from chromosomes to the spindle midzone in anaphase and mediates the ubiquitination of AURKB. Ubiquitination of AURKB by BCR(KLHL21) E3 ubiquitin ligase complex may not lead to its degradation by the proteasome. The polypeptide is Kelch-like protein 21 (Klhl21) (Rattus norvegicus (Rat)).